The following is a 37-amino-acid chain: MKVRASVKKMCEKCRVIRRHGRVMVICPNPKHKQRQG.

This sequence belongs to the bacterial ribosomal protein bL36 family.

In Synechococcus sp. (strain CC9311), this protein is Large ribosomal subunit protein bL36.